The sequence spans 515 residues: 2,3-bisphosphoglycerate-independent phosphoglycerate mutase (515 aa).

2 residues coordinate Mn(2+): D14 and S64. The active-site Phosphoserine intermediate is the S64. Substrate-binding positions include H125, 155–156, R187, R193, 263–266, and K337; these read RD and RADR. Mn(2+) is bound by residues D404, H408, D445, H446, and H464.

This sequence belongs to the BPG-independent phosphoglycerate mutase family. Monomer. Mn(2+) serves as cofactor.

The catalysed reaction is (2R)-2-phosphoglycerate = (2R)-3-phosphoglycerate. It functions in the pathway carbohydrate degradation; glycolysis; pyruvate from D-glyceraldehyde 3-phosphate: step 3/5. Its function is as follows. Catalyzes the interconversion of 2-phosphoglycerate and 3-phosphoglycerate. The sequence is that of 2,3-bisphosphoglycerate-independent phosphoglycerate mutase from Pseudomonas aeruginosa (strain UCBPP-PA14).